Reading from the N-terminus, the 400-residue chain is Deoxyguanosinetriphosphate triphosphohydrolase-like protein (400 aa).

The region spanning 73 to 215 is the HD domain; it reads RLTHSIEVSQ…AAIADDIAYN (143 aa).

This sequence belongs to the dGTPase family. Type 2 subfamily.

The chain is Deoxyguanosinetriphosphate triphosphohydrolase-like protein from Bartonella tribocorum (strain CIP 105476 / IBS 506).